A 451-amino-acid chain; its full sequence is Chromosomal replication initiator protein DnaA (451 aa).

The interval 1–71 (MSEQEIWKKV…QTIMKDVIGY (71 aa)) is domain I, interacts with DnaA modulators. Positions 71 to 112 (YEVEPKFFTAEQLAELDETSRKSNTPSEPQRQIIEYGHEGTD) are domain II. The domain III, AAA+ region stretch occupies residues 113–329 (QFNTHNTFDT…GALTRLLAYS (217 aa)). G157, G159, K160, and T161 together coordinate ATP. Positions 330–451 (KLQGRPITTE…EDLEKEIRNQ (122 aa)) are domain IV, binds dsDNA.

The protein belongs to the DnaA family. In terms of assembly, oligomerizes as a right-handed, spiral filament on DNA at oriC.

The protein localises to the cytoplasm. Its function is as follows. Plays an essential role in the initiation and regulation of chromosomal replication. ATP-DnaA binds to the origin of replication (oriC) to initiate formation of the DNA replication initiation complex once per cell cycle. Binds the DnaA box (a 9 base pair repeat at the origin) and separates the double-stranded (ds)DNA. Forms a right-handed helical filament on oriC DNA; dsDNA binds to the exterior of the filament while single-stranded (ss)DNA is stabiized in the filament's interior. The ATP-DnaA-oriC complex binds and stabilizes one strand of the AT-rich DNA unwinding element (DUE), permitting loading of DNA polymerase. After initiation quickly degrades to an ADP-DnaA complex that is not apt for DNA replication. Binds acidic phospholipids. In Staphylococcus haemolyticus (strain JCSC1435), this protein is Chromosomal replication initiator protein DnaA.